The primary structure comprises 907 residues: Anaphase-promoting complex subunit 2 (907 aa).

2 disordered regions span residues 203 to 228 and 790 to 838; these read NNSKDLEFNDQQQEEEEEEEENEEES and NKEK…AKEK. Composition is skewed to acidic residues over residues 214 to 226 and 804 to 830; these read QQEEEEEEEENEE and ENDDQDESSSDDDDDDNNIVVEEEEEE.

Belongs to the cullin family. The APC/C is composed of at least 13 subunits that stay tightly associated throughout the cell cycle: anapc1, anapc2, anapc3, anapc4, anapc5, anapc6, anapc7, anapc8, anapc10, anapc11, cdc20, cdc26 and cdh1.

It localises to the nucleus. It functions in the pathway protein modification; protein ubiquitination. Functionally, component of the anaphase promoting complex/cyclosome (APC/C), a cell cycle-regulated E3 ubiquitin-protein ligase complex that controls progression through mitosis and the G1 phase of the cell cycle. The polypeptide is Anaphase-promoting complex subunit 2 (anapc2) (Dictyostelium discoideum (Social amoeba)).